Consider the following 165-residue polypeptide: uncharacterized protein (165 aa).

5 helical membrane passes run 30-50 (GWELLGTIGFVAFCSFYAAGG), 65-85 (GMVWAFFAALTAGWLASVSGL), 86-106 (SAFWASVITTVPFSAVVVWQG), 108-128 (FWLLSFIPGGFLGMTLFFASG), and 131-151 (WTVTLLGFLAGNCVGVISEYG).

It to E.coli YcdZ.

Its subcellular location is the cell membrane. This is an uncharacterized protein from Escherichia coli (strain K12).